The following is a 155-amino-acid chain: Endoribonuclease YbeY (155 aa).

Zn(2+) contacts are provided by histidine 114, histidine 118, and histidine 124.

It belongs to the endoribonuclease YbeY family. The cofactor is Zn(2+).

It is found in the cytoplasm. In terms of biological role, single strand-specific metallo-endoribonuclease involved in late-stage 70S ribosome quality control and in maturation of the 3' terminus of the 16S rRNA. In Proteus mirabilis (strain HI4320), this protein is Endoribonuclease YbeY.